We begin with the raw amino-acid sequence, 506 residues long: MKEYQVYLERARSRQQDFLYPLIFREYIYGLAYSHNFNRSIFLENVGSDSKYSLLIVKRLITRMYQQNHLIISANDSNKNPFWGYNKNIYSQIISEGFAIVVEIPFFLELSSSLEEAEIIKSYKNLRSIHSIFPFLEDKFTYFNYVSDIRIPYPIHLEILVQILRYWVKDAPFFHLLRLFLYNFSNWNSFITTKNSISTFSKSNPRLFLFLYNFYVCEYESIFLFLRNKSSHLRLKSFNVFFERIFFYAKREHLVEVFAKDFSYTLTFFKDPLIHYVRYQGKCILASKNSPFLMNKWKHYFIHLWQGFFYVWSQPRTMNINQLSEHSFQLLGYFLNVRVNRSVVRSQMLQNTFLIEIFNKKLDLIVPIIPLIRSLAKAKFCNVLGHPISKPVWADSSDFDIIDRFLRICRNLSHYYNGSSKKKSLYRIKYILRLSCIKTLACKHKSTVRAFLKRSGSEELLEEFFTEEEEILSLIFPRDSSTLHRLNRNRIWYLDILFSNDLVNDE.

It belongs to the intron maturase 2 family. MatK subfamily.

The protein localises to the plastid. It is found in the chloroplast. Its function is as follows. Usually encoded in the trnK tRNA gene intron. Probably assists in splicing its own and other chloroplast group II introns. In Medicago truncatula (Barrel medic), this protein is Maturase K.